A 278-amino-acid chain; its full sequence is MDVKIAKTAGFCWGVRRTVDKVMEVADQHRAPVVTLGPIIHNPQAVARFSEKGVGTVNGIGEVTDGTTVVVRTHGAVREELERAEARGLEVVDGTCPYVKYPQAMAQRLSREGYHIVIVGDANHAEIKGVISYSEQPCTVVKPGGPVPEIKAKKVAVIAQTTCIGAEFERVVGVLALRHKEVRAVNTICNDTEERQADARALASEVDAVVVVGGKNSANTRHLAEICRAIQPRTWHVETEAELGAAWFEGCRVVGLSAGASTPDWVVEGVAAWLRALR.

[4Fe-4S] cluster is bound at residue Cys12. His41 and His74 together coordinate (2E)-4-hydroxy-3-methylbut-2-enyl diphosphate. The dimethylallyl diphosphate site is built by His41 and His74. Isopentenyl diphosphate-binding residues include His41 and His74. A [4Fe-4S] cluster-binding site is contributed by Cys96. His124 is a (2E)-4-hydroxy-3-methylbut-2-enyl diphosphate binding site. Position 124 (His124) interacts with dimethylallyl diphosphate. Position 124 (His124) interacts with isopentenyl diphosphate. Residue Glu126 is the Proton donor of the active site. Residue Thr161 coordinates (2E)-4-hydroxy-3-methylbut-2-enyl diphosphate. Position 189 (Cys189) interacts with [4Fe-4S] cluster. Ser217, Asn219, and Ser261 together coordinate (2E)-4-hydroxy-3-methylbut-2-enyl diphosphate. 3 residues coordinate dimethylallyl diphosphate: Ser217, Asn219, and Ser261. Residues Ser217, Asn219, and Ser261 each contribute to the isopentenyl diphosphate site.

It belongs to the IspH family. [4Fe-4S] cluster is required as a cofactor.

It carries out the reaction isopentenyl diphosphate + 2 oxidized [2Fe-2S]-[ferredoxin] + H2O = (2E)-4-hydroxy-3-methylbut-2-enyl diphosphate + 2 reduced [2Fe-2S]-[ferredoxin] + 2 H(+). It catalyses the reaction dimethylallyl diphosphate + 2 oxidized [2Fe-2S]-[ferredoxin] + H2O = (2E)-4-hydroxy-3-methylbut-2-enyl diphosphate + 2 reduced [2Fe-2S]-[ferredoxin] + 2 H(+). It participates in isoprenoid biosynthesis; dimethylallyl diphosphate biosynthesis; dimethylallyl diphosphate from (2E)-4-hydroxy-3-methylbutenyl diphosphate: step 1/1. The protein operates within isoprenoid biosynthesis; isopentenyl diphosphate biosynthesis via DXP pathway; isopentenyl diphosphate from 1-deoxy-D-xylulose 5-phosphate: step 6/6. In terms of biological role, catalyzes the conversion of 1-hydroxy-2-methyl-2-(E)-butenyl 4-diphosphate (HMBPP) into a mixture of isopentenyl diphosphate (IPP) and dimethylallyl diphosphate (DMAPP). Acts in the terminal step of the DOXP/MEP pathway for isoprenoid precursor biosynthesis. The protein is 4-hydroxy-3-methylbut-2-enyl diphosphate reductase of Anaeromyxobacter sp. (strain K).